Here is a 124-residue protein sequence, read N- to C-terminus: UPF0299 membrane protein VIBHAR_02118 (124 aa).

A run of 4 helical transmembrane segments spans residues 6–26, 35–55, 72–92, and 95–115; these read LLQL…LGIG, VSVP…TLGL, MILL…MLLA, and LPII…LAWF.

Belongs to the UPF0299 family.

It is found in the cell inner membrane. This is UPF0299 membrane protein VIBHAR_02118 from Vibrio campbellii (strain ATCC BAA-1116).